A 292-amino-acid polypeptide reads, in one-letter code: 4'-phosphopantetheinyl transferase 1 (292 aa).

Belongs to the P-Pant transferase superfamily.

The enzyme catalyses apo-[ACP] + CoA = holo-[ACP] + adenosine 3',5'-bisphosphate + H(+). In terms of biological role, transfers the 4'-phosphopantetheine moiety from coenzyme A to a Ser of an acyl-carrier-protein. The enzyme is able to transfer the cofactor to a broad range of enzymes with acyl- or peptidyl-carrier protein domains. Required for primary biological processes such as growth and asexual/sexual development, and activates target enzymes involved in the synthesis of metabolites such as fatty acids, nonribosomal peptides and polyketides such as the gamma-pyrones fusapyrone (FPY) and deoxyfusapyrone (dFPY). The chain is 4'-phosphopantetheinyl transferase 1 from Fusarium mangiferae (Mango malformation disease fungus).